The following is a 301-amino-acid chain: 2-aminobenzoylacetyl-CoA thioesterase (301 aa).

Positions 69, 71, 73, 74, 159, 178, and 221 each coordinate Fe cation.

It belongs to the metallo-beta-lactamase superfamily.

The enzyme catalyses (2-aminobenzoyl)acetyl-CoA + H2O = (2-aminobenzoyl)acetate + CoA + H(+). Thioesterase activity, but not pyocyanine production, is inhibited by 2-(pyridin-3-yl)benzoic acid, 2-(1H-pyrrol-1-yl)benzoic acid and 3-methylthiophene-2-carboxylic acid. Compounds bind to the active center. Its function is as follows. Required for the biosynthesis of the quorum-sensing signaling molecules 2-heptyl-4(1H)-quinolone (HHQ) and 2-heptyl-3-hydroxy-4(1H)-quinolone (Pseudomonas quinolone signal or PQS), which are important for biofilm formation and virulence. Catalyzes the hydrolysis of the intermediate 2-aminobenzoylacetyl-CoA (2-ABA-CoA) to form 2-aminobenzoylacetate (2-ABA), the precursor of HHQ. In vitro, can also hydrolyze other substrates such as S-ethyl-acetothioacetate and acetoacetyl-CoA, but is inactive against anthraniloyl-CoA, malonyl-CoA and octanoyl-CoA. Beyond its thioesterase function, is involved in the regulation of diverse genes coding for key virulence determinants and biofilm development. The sequence is that of 2-aminobenzoylacetyl-CoA thioesterase from Pseudomonas aeruginosa (strain ATCC 15692 / DSM 22644 / CIP 104116 / JCM 14847 / LMG 12228 / 1C / PRS 101 / PAO1).